An 88-amino-acid polypeptide reads, in one-letter code: Putative regulatory protein PCC7424_3427 (88 aa).

This sequence belongs to the RemA family.

This chain is Putative regulatory protein PCC7424_3427, found in Gloeothece citriformis (strain PCC 7424) (Cyanothece sp. (strain PCC 7424)).